Here is a 147-residue protein sequence, read N- to C-terminus: Hemoglobin subunit beta-2 (147 aa).

The 145-residue stretch at 3–147 (HWTAEEKATI…LVAALSHGYF (145 aa)) folds into the Globin domain. 2 residues coordinate heme b: H64 and H93.

Belongs to the globin family. In terms of assembly, heterotetramer of two alpha chains and two beta chains. In terms of tissue distribution, red blood cells.

In terms of biological role, this is a larval (tadpole) beta-globin. In Xenopus tropicalis (Western clawed frog), this protein is Hemoglobin subunit beta-2 (hbb2).